Consider the following 182-residue polypeptide: Large ribosomal subunit protein uL10 (182 aa).

This sequence belongs to the universal ribosomal protein uL10 family. Part of the ribosomal stalk of the 50S ribosomal subunit. The N-terminus interacts with L11 and the large rRNA to form the base of the stalk. The C-terminus forms an elongated spine to which L12 dimers bind in a sequential fashion forming a multimeric L10(L12)X complex.

Its function is as follows. Forms part of the ribosomal stalk, playing a central role in the interaction of the ribosome with GTP-bound translation factors. This chain is Large ribosomal subunit protein uL10, found in Microcystis aeruginosa (strain NIES-843 / IAM M-2473).